A 632-amino-acid chain; its full sequence is MAU2 chromatid cohesion factor homolog (632 aa).

2 TPR repeats span residues G453 to E486 and S493 to I526.

It belongs to the SCC4/mau-2 family. As to quaternary structure, interacts with Nipped-B to form the cohesin loading complex.

The protein resides in the nucleus. It is found in the nucleoplasm. Its function is as follows. Required for association of the cohesin complex with chromatin during interphase. Plays a role in sister chromatid cohesion and normal progression through prometaphase. The protein is MAU2 chromatid cohesion factor homolog of Drosophila simulans (Fruit fly).